A 344-amino-acid chain; its full sequence is Succinylglutamate desuccinylase (344 aa).

Zn(2+)-binding residues include His-63, Glu-66, and His-160. Glu-224 is a catalytic residue.

The protein belongs to the AspA/AstE family. Succinylglutamate desuccinylase subfamily. The cofactor is Zn(2+).

The catalysed reaction is N-succinyl-L-glutamate + H2O = L-glutamate + succinate. Its pathway is amino-acid degradation; L-arginine degradation via AST pathway; L-glutamate and succinate from L-arginine: step 5/5. Transforms N(2)-succinylglutamate into succinate and glutamate. In Shewanella baltica (strain OS223), this protein is Succinylglutamate desuccinylase.